We begin with the raw amino-acid sequence, 4763 residues long: Nonribosomal peptide synthetase sidC (4763 aa).

Residues 1 to 24 (MAGTANPADEGLTGPTETTNHINS) form a disordered region. Residues 15 to 24 (PTETTNHINS) are compositionally biased toward polar residues. The tract at residues 296–815 (STVAEHSTLT…SSGKVDRNSI (520 aa)) is adenylation 1. The Carrier 1 domain occupies 853 to 930 (EKALELRTLV…GLLTLILNGK (78 aa)). Position 890 is an O-(pantetheine 4'-phosphoryl)serine (serine 890). A condensation 1 region spans residues 1003 to 1396 (TRSYIYHSVI…DIIAFILQNP (394 aa)). An adenylation 2 region spans residues 1398-1951 (GDFENALLYT…AKTDRRALQA (554 aa)). Residues 1979-2055 (LVASDAMEKI…DLARLCTSSS (77 aa)) form the Carrier 2 domain. An O-(pantetheine 4'-phosphoryl)serine modification is found at serine 2016. Residues 2092-2423 (TPIQESLLSE…HIHAREVRRM (332 aa)) form a condensation 2 region. The interval 2556–3070 (ELNAREHPEW…MSGKANIKEL (515 aa)) is adenylation 3. Residues 3099–3175 (RPLSSDEEAV…QLAQLPRKST (77 aa)) form the Carrier 3 domain. At serine 3136 the chain carries O-(pantetheine 4'-phosphoryl)serine. The condensation 3 stretch occupies residues 3217-3626 (PLQEGLVARS…DDIALDSFSL (410 aa)). One can recognise a Carrier 4 domain in the interval 3647–3720 (SATETKIRDL…ALAEHVDERS (74 aa)). Serine 3681 carries the post-translational modification O-(pantetheine 4'-phosphoryl)serine. Residues 3761–4093 (TPLQAGMITR…SLFDTLFVFQ (333 aa)) are condensation 4. Residues 4204–4277 (PAHESIIRDV…GISARIISPV (74 aa)) enclose the Carrier 5 domain. O-(pantetheine 4'-phosphoryl)serine is present on serine 4238. Residues 4344-4593 (ERIDSGKLEE…PCLNVTPFTF (250 aa)) form a condensation 5 region.

This sequence belongs to the NRP synthetase family.

It participates in siderophore biosynthesis. Its function is as follows. Nonribosomal peptide synthase; part of the siderophore biosynthetic pathway. Aspergillus fumigatus produces four types of siderophores, low-molecular-mass iron chelators, including excreted fusarinine C (FsC) and triacetylfusarinine C (TAFC) for iron uptake; and intacellular ferricrocin (FC) for hyphal and hydroxyferricrocin (HFC) for conidial iron distribution and storage. TAFC consists of three N(2)-acetyl-N(5)-anhydromevalonyl-N(5)-hydroxyornithine residues cyclically linked by ester bonds; FC is a cyclic hexapeptide with the structure Gly-Ser-Gly-(N(5)-acetyl-N(5)-hydroxyornithine)x3. The biosynthesis of all four siderophores depends on the hydroxylation of ornithine, catalyzed by the monooxygenase sidA. Subsequently, the pathways for biosynthesis of extra- and intracellular siderophores split. For biosynthesis of extracellular siderophores, the transacylase sidF transfers anhydromevalonyl to N(5)-hydroxyornithine. The required anhydromevalonyl-CoA moiety is derived from mevalonate by CoA ligation and dehydration catalyzed by sidI and sidH respectively. The acetylation of N(5)-hydroxyornithine for FC biosynthesis involves the constitutively expressed sidL. FC is hydroxylated to HFC by an as yet uncharacterized enzyme during conidiation. Assembly of fusarinine C (FsC) and FC is catalyzed by two different nonribosomal peptide synthetases (NRPS), sidD and sidC respectively. Subsequently, sidG catalyzes N2-acetylation of FsC for forming TAFC. Both extra- and intracellular siderophores are crucial for growth during iron limitation and virulence. This Aspergillus fumigatus (strain ATCC MYA-4609 / CBS 101355 / FGSC A1100 / Af293) (Neosartorya fumigata) protein is Nonribosomal peptide synthetase sidC.